The sequence spans 325 residues: Large ribosomal subunit protein uL4m (325 aa).

Positions 113 to 158 are disordered; that stretch reads ASTKTRYEVHGSHKKMSPQKGTGNARRGTRQSPLMKGGGKTFGPKP.

Belongs to the universal ribosomal protein uL4 family. Component of the mitochondrial large ribosomal subunit (mt-LSU). Mature N.crassa 74S mitochondrial ribosomes consist of a small (37S) and a large (54S) subunit. The 37S small subunit contains a 16S ribosomal RNA (16S mt-rRNA) and 32 different proteins. The 54S large subunit contains a 23S rRNA (23S mt-rRNA) and 42 different proteins.

It localises to the mitochondrion. Functionally, component of the mitochondrial ribosome (mitoribosome), a dedicated translation machinery responsible for the synthesis of mitochondrial genome-encoded proteins, including at least some of the essential transmembrane subunits of the mitochondrial respiratory chain. The mitoribosomes are attached to the mitochondrial inner membrane and translation products are cotranslationally integrated into the membrane. This chain is Large ribosomal subunit protein uL4m (yml6), found in Neurospora crassa (strain ATCC 24698 / 74-OR23-1A / CBS 708.71 / DSM 1257 / FGSC 987).